A 186-amino-acid polypeptide reads, in one-letter code: Chromosomal replication initiator protein DnaA (186 aa).

Residue Glu-1 is a region of interest, domain I, interacts with DnaA modulators. Residue Glu-1 is a region of interest, domain II. The tract at residues 1–99 is domain III, AAA+ region; the sequence is EFFKTFNALI…GALNKVTHTS (99 aa). The domain IV, binds dsDNA stretch occupies residues 100–186; the sequence is LIGRSMTVES…GRNFGGRDHT (87 aa).

It belongs to the DnaA family. In terms of assembly, oligomerizes as a right-handed, spiral filament on DNA at oriC.

The protein localises to the cytoplasm. Its function is as follows. Plays an essential role in the initiation and regulation of chromosomal replication. ATP-DnaA binds to the origin of replication (oriC) to initiate formation of the DNA replication initiation complex once per cell cycle. Binds the DnaA box (a 9 base pair repeat at the origin) and separates the double-stranded (ds)DNA. Forms a right-handed helical filament on oriC DNA; dsDNA binds to the exterior of the filament while single-stranded (ss)DNA is stabiized in the filament's interior. The ATP-DnaA-oriC complex binds and stabilizes one strand of the AT-rich DNA unwinding element (DUE), permitting loading of DNA polymerase. After initiation quickly degrades to an ADP-DnaA complex that is not apt for DNA replication. Binds acidic phospholipids. This is Chromosomal replication initiator protein DnaA from Wolbachia sp.